An 825-amino-acid polypeptide reads, in one-letter code: Zygotic DNA replication licensing factor mcm6-B (825 aa).

A C4-type zinc finger spans residues 159–186 (CLDCQTLVRDVEQQFKYTQPSICRNPVC). Positions 347–554 (LYHNLCTSLF…TDYAIARRIV (208 aa)) constitute an MCM domain. Residue 397–404 (GDPSTAKS) participates in ATP binding. Positions 529 to 532 (SRFD) match the Arginine finger motif. The segment covering 668–679 (DQEDEHEVEEPQ) has biased composition (acidic residues). The segment at 668–690 (DQEDEHEVEEPQEGINGDADVPN) is disordered.

It belongs to the MCM family. Component of the mcm2-7 complex (RLF-M). The complex forms a toroidal hexameric ring with the proposed subunit order mcm2-mcm6-mcm4-mcm7-mcm3-mcm5 (By simililarity). Begins to associate with zmcm3, mcm4 and mcm7 into mcm complexes at the neurula stage.

It is found in the nucleus. It carries out the reaction ATP + H2O = ADP + phosphate + H(+). Acts as a component of the mcm2-7 complex (mcm complex) which is the putative replicative helicase essential for 'once per cell cycle' DNA replication initiation and elongation in eukaryotic cells. The active ATPase sites in the mcm2-7 ring are formed through the interaction surfaces of two neighboring subunits such that a critical structure of a conserved arginine finger motif is provided in trans relative to the ATP-binding site of the Walker A box of the adjacent subunit. The six ATPase active sites, however, are likely to contribute differentially to the complex helicase activity. The existence of maternal and zygotic forms of mcm3 and mcm6 suggests that specific forms of mcm2-7 complexes may be used during different stages of development. May replace mmcm6 in the mcm2-7 complex. The protein is Zygotic DNA replication licensing factor mcm6-B (zmcm6-b) of Xenopus laevis (African clawed frog).